Here is a 344-residue protein sequence, read N- to C-terminus: 5,10-methenyltetrahydromethanopterin hydrogenase (344 aa).

Belongs to the HMD family. In terms of assembly, homotetramer.

It carries out the reaction 5,10-methenyl-5,6,7,8-tetrahydromethanopterin + H2 = 5,10-methylenetetrahydromethanopterin + H(+). Its pathway is one-carbon metabolism; methanogenesis from CO(2); 5,10-methylene-5,6,7,8-tetrahydromethanopterin from 5,10-methenyl-5,6,7,8-tetrahydromethanopterin (hydrogen route): step 1/1. Activity requires salt; 100 mM sodium or potassium salts of chloride, phosphate or sulfate are equally effective. Inactivated by O(2). Functionally, catalyzes the reversible reduction of methenyl-H(4)MPT(+) to methylene-H(4)MPT. The chain is 5,10-methenyltetrahydromethanopterin hydrogenase from Methanothermobacter marburgensis (strain ATCC BAA-927 / DSM 2133 / JCM 14651 / NBRC 100331 / OCM 82 / Marburg) (Methanobacterium thermoautotrophicum).